A 388-amino-acid polypeptide reads, in one-letter code: Diphosphomevalonate decarboxylase (388 aa).

(R)-5-diphosphomevalonate contacts are provided by residues 19-22, Arg-74, 153-158, and Thr-209; these read YWGK and SGSACR. The interval 367–388 is disordered; the sequence is QGPQGSSESLINDKGLPKAVAN.

It belongs to the diphosphomevalonate decarboxylase family. Homodimer.

The enzyme catalyses (R)-5-diphosphomevalonate + ATP = isopentenyl diphosphate + ADP + phosphate + CO2. It participates in isoprenoid biosynthesis; isopentenyl diphosphate biosynthesis via mevalonate pathway; isopentenyl diphosphate from (R)-mevalonate: step 3/3. In terms of biological role, diphosphomevalonate decarboxylase; part of the second module of ergosterol biosynthesis pathway that includes the middle steps of the pathway. The second module is carried out in the vacuole and involves the formation of farnesyl diphosphate, which is also an important intermediate in the biosynthesis of ubiquinone, dolichol, heme and prenylated proteins. Activity by the mevalonate kinase ERG12 first converts mevalonate into 5-phosphomevalonate. 5-phosphomevalonate is then further converted to 5-diphosphomevalonate by the phosphomevalonate kinase ERG8. The diphosphomevalonate decarboxylase MVD1/ERG19 then produces isopentenyl diphosphate. The isopentenyl-diphosphate delta-isomerase IDI1 then catalyzes the 1,3-allylic rearrangement of the homoallylic substrate isopentenyl (IPP) to its highly electrophilic allylic isomer, dimethylallyl diphosphate (DMAPP). Finally the farnesyl diphosphate synthase ERG20 catalyzes the sequential condensation of isopentenyl pyrophosphate with dimethylallyl pyrophosphate, and then with the resultant geranylpyrophosphate to the ultimate product farnesyl pyrophosphate. This Debaryomyces hansenii (strain ATCC 36239 / CBS 767 / BCRC 21394 / JCM 1990 / NBRC 0083 / IGC 2968) (Yeast) protein is Diphosphomevalonate decarboxylase.